A 310-amino-acid chain; its full sequence is uncharacterized protein (310 aa).

Transmembrane regions (helical) follow at residues 1–21 (MIYFFISSLFFLILITLMFSK), 38–58 (FFFYFLLFVLFIFIFWLVVYT), 74–94 (TSYFLEILLSIDNVFAWFFIF), 110–130 (YGLWGALILRSIFSFSGSFLF), 135–155 (WILYLFGGFFILTSLKFIFFS), 194–214 (IFITPLFVSLILIELSDIVFS), 228–248 (LFIIFSSNFFAVLGLRSMYLF), 256–276 (FPIMKYALSLILMFIGFKILI), and 284–304 (IFLTLAVILIILITTFLINLI).

This sequence belongs to the TerC family.

Its subcellular location is the cell membrane. This is an uncharacterized protein from Buchnera aphidicola subsp. Schizaphis graminum (strain Sg).